We begin with the raw amino-acid sequence, 139 residues long: Aspartate 1-decarboxylase (139 aa).

Ser25 functions as the Schiff-base intermediate with substrate; via pyruvic acid in the catalytic mechanism. Ser25 carries the pyruvic acid (Ser) modification. Thr57 serves as a coordination point for substrate. Catalysis depends on Tyr58, which acts as the Proton donor. Position 73 to 75 (73 to 75) interacts with substrate; sequence GAA. The interval 116-139 is disordered; sequence ELGEDPAHAPAGSGLKDPRHPEGE.

It belongs to the PanD family. In terms of assembly, heterooctamer of four alpha and four beta subunits. Requires pyruvate as cofactor. In terms of processing, is synthesized initially as an inactive proenzyme, which is activated by self-cleavage at a specific serine bond to produce a beta-subunit with a hydroxyl group at its C-terminus and an alpha-subunit with a pyruvoyl group at its N-terminus.

It is found in the cytoplasm. The catalysed reaction is L-aspartate + H(+) = beta-alanine + CO2. It participates in cofactor biosynthesis; (R)-pantothenate biosynthesis; beta-alanine from L-aspartate: step 1/1. Catalyzes the pyruvoyl-dependent decarboxylation of aspartate to produce beta-alanine. This Corynebacterium urealyticum (strain ATCC 43042 / DSM 7109) protein is Aspartate 1-decarboxylase.